Here is a 65-residue protein sequence, read N- to C-terminus: Large ribosomal subunit protein uL30 (65 aa).

Belongs to the universal ribosomal protein uL30 family. In terms of assembly, part of the 50S ribosomal subunit.

The chain is Large ribosomal subunit protein uL30 from Methylobacillus flagellatus (strain ATCC 51484 / DSM 6875 / VKM B-1610 / KT).